Consider the following 373-residue polypeptide: Ubiquitin carboxyl-terminal hydrolase 50 (373 aa).

Residues T44–Q364 form the USP domain. The active-site Nucleophile is C53. H322 (proton acceptor) is an active-site residue.

Belongs to the peptidase C19 family.

It localises to the cytoplasm. The protein localises to the cytoskeleton. It is found in the microtubule organizing center. The protein resides in the centrosome. Its subcellular location is the nucleus. The enzyme catalyses Thiol-dependent hydrolysis of ester, thioester, amide, peptide and isopeptide bonds formed by the C-terminal Gly of ubiquitin (a 76-residue protein attached to proteins as an intracellular targeting signal).. Deubiquitinating enzyme that removes conjugated ubiquitin from specific proteins to regulate different cellular processes. Regulates the inflammasome signaling pathway by deubiquitinating 'Lys-63'-linked polyubiquitination of the PYCARD/ASC adapter protein. Regulates the ubiquitination and stability of the ACE2 protein. Acts as a negative regulator of the G2/M checkpoint pathway, by preventing serine/threonine kinase WEE1 degradation, thereby repressing entry into mitosis following activation of the G2/M DNA damage checkpoint. This is Ubiquitin carboxyl-terminal hydrolase 50 (USP50) from Macaca fascicularis (Crab-eating macaque).